The primary structure comprises 368 residues: Probable protein phosphatase 2C 58 (368 aa).

Positions 23–329 constitute a PPM-type phosphatase domain; it reads KFGLSSMQGW…DNMTMILVQF (307 aa). Residues D57, G58, D272, and D320 each contribute to the Mn(2+) site. The segment at 336–368 is disordered; it reads NKNVSPAEQSAADKQPTGDTHWSEIHVTEESSS. The segment covering 356-368 has biased composition (basic and acidic residues); it reads HWSEIHVTEESSS.

It belongs to the PP2C family. Mg(2+) is required as a cofactor. The cofactor is Mn(2+).

It carries out the reaction O-phospho-L-seryl-[protein] + H2O = L-seryl-[protein] + phosphate. It catalyses the reaction O-phospho-L-threonyl-[protein] + H2O = L-threonyl-[protein] + phosphate. The chain is Probable protein phosphatase 2C 58 from Oryza sativa subsp. japonica (Rice).